The primary structure comprises 189 residues: Glycerol-3-phosphate acyltransferase (189 aa).

Transmembrane regions (helical) follow at residues 1-21, 50-70, 72-92, 111-131, and 151-171; these read MVWL…AVLL, KLAI…VLVA, WLGL…IGHL, MLLG…LLTF, and LLAW…GLIV.

This sequence belongs to the PlsY family. Probably interacts with PlsX.

Its subcellular location is the cell inner membrane. It catalyses the reaction an acyl phosphate + sn-glycerol 3-phosphate = a 1-acyl-sn-glycero-3-phosphate + phosphate. It participates in lipid metabolism; phospholipid metabolism. Functionally, catalyzes the transfer of an acyl group from acyl-phosphate (acyl-PO(4)) to glycerol-3-phosphate (G3P) to form lysophosphatidic acid (LPA). This enzyme utilizes acyl-phosphate as fatty acyl donor, but not acyl-CoA or acyl-ACP. The sequence is that of Glycerol-3-phosphate acyltransferase from Pseudomonas aeruginosa (strain LESB58).